The sequence spans 144 residues: Large ribosomal subunit protein uL15 (144 aa).

The tract at residues 1–45 (MNLNTLSPDPGSRPSRRRVGRGIGSGLGKTCGKGHKGQKSRAGGY) is disordered. Over residues 21–31 (RGIGSGLGKTC) the composition is skewed to gly residues.

It belongs to the universal ribosomal protein uL15 family. Part of the 50S ribosomal subunit.

In terms of biological role, binds to the 23S rRNA. The sequence is that of Large ribosomal subunit protein uL15 from Legionella pneumophila (strain Corby).